Here is a 193-residue protein sequence, read N- to C-terminus: 7-methyl-GTP pyrophosphatase (193 aa).

Catalysis depends on Asp70, which acts as the Proton acceptor.

This sequence belongs to the Maf family. YceF subfamily. It depends on a divalent metal cation as a cofactor.

The protein localises to the cytoplasm. The enzyme catalyses N(7)-methyl-GTP + H2O = N(7)-methyl-GMP + diphosphate + H(+). In terms of biological role, nucleoside triphosphate pyrophosphatase that hydrolyzes 7-methyl-GTP (m(7)GTP). May have a dual role in cell division arrest and in preventing the incorporation of modified nucleotides into cellular nucleic acids. This chain is 7-methyl-GTP pyrophosphatase, found in Photobacterium profundum (strain SS9).